Here is a 438-residue protein sequence, read N- to C-terminus: Glutaryl-CoA dehydrogenase, mitochondrial (438 aa).

A mitochondrion-targeting transit peptide spans 1-44 (MALRGVYAQLLNRGPGLRVFRSWSSATAQTEKGEKTQSRSAKPS). Substrate contacts are provided by residues 138 to 139 (RS) and S186. Residues 177-186 (FGLTEPNHGS), S186, and 212-214 (WIT) each bind FAD. K240 is subject to N6-acetyllysine. 287 to 294 (FGCLNNAR) is a substrate binding site. Residues R319, Q330, and 387 to 391 (DMLGG) each bind FAD. E414 functions as the Proton acceptor in the catalytic mechanism. G415 contributes to the substrate binding site. FAD contacts are provided by residues T416, 416-418 (THD), and F434.

Belongs to the acyl-CoA dehydrogenase family. As to quaternary structure, homotetramer. FAD serves as cofactor.

The protein resides in the mitochondrion matrix. The enzyme catalyses glutaryl-CoA + oxidized [electron-transfer flavoprotein] + 2 H(+) = (2E)-butenoyl-CoA + reduced [electron-transfer flavoprotein] + CO2. Its pathway is amino-acid metabolism; lysine degradation. The protein operates within amino-acid metabolism; tryptophan metabolism. Functionally, catalyzes the oxidative decarboxylation of glutaryl-CoA to crotonyl-CoA and CO(2) in the degradative pathway of L-lysine, L-hydroxylysine, and L-tryptophan metabolism. It uses electron transfer flavoprotein as its electron acceptor. The polypeptide is Glutaryl-CoA dehydrogenase, mitochondrial (GCDH) (Bos taurus (Bovine)).